Here is a 434-residue protein sequence, read N- to C-terminus: Enolase (434 aa).

Q163 is a binding site for (2R)-2-phosphoglycerate. E205 (proton donor) is an active-site residue. D242, E291, and D318 together coordinate Mg(2+). Residues K343, R372, S373, and K394 each coordinate (2R)-2-phosphoglycerate. Residue K343 is the Proton acceptor of the active site.

This sequence belongs to the enolase family. It depends on Mg(2+) as a cofactor.

It localises to the cytoplasm. The protein resides in the secreted. It is found in the cell surface. The enzyme catalyses (2R)-2-phosphoglycerate = phosphoenolpyruvate + H2O. The protein operates within carbohydrate degradation; glycolysis; pyruvate from D-glyceraldehyde 3-phosphate: step 4/5. Functionally, catalyzes the reversible conversion of 2-phosphoglycerate (2-PG) into phosphoenolpyruvate (PEP). It is essential for the degradation of carbohydrates via glycolysis. This is Enolase from Streptococcus intermedius.